Consider the following 236-residue polypeptide: MASLPVQFTRNQISSPFFSVNLRREPRSLVTVHCSAGENRENGEGVKKSLFPLKELGSIACAALCACTLTIASPVIAANQRLPPLSTEPDRCEKAFVGNTIGQANGVYDKPLDLRFCDYTNDQTNLKGKTLSAALMVGAKFDGADMTEVVMSKAYAVEASFKGVNFTNAVIDRVNFGKSNLKGAVFRNTVLSGSTFEEANLEDVVFEDTIIGYIDLQKICRNESINEEGRLVLGCR.

Pentapeptide repeat domains are found at residues 124-163 (TNLK…SFKG) and 169-208 (AVID…VFED).

As to quaternary structure, interacts in vitro with LTO1.

Its subcellular location is the plastid. The protein localises to the chloroplast thylakoid lumen. The polypeptide is Thylakoid lumenal 17.4 kDa protein, chloroplastic (Arabidopsis thaliana (Mouse-ear cress)).